The sequence spans 194 residues: 7-methyl-GTP pyrophosphatase (194 aa).

The Proton acceptor role is filled by Asp-69.

The protein belongs to the Maf family. YceF subfamily. A divalent metal cation is required as a cofactor.

It is found in the cytoplasm. It catalyses the reaction N(7)-methyl-GTP + H2O = N(7)-methyl-GMP + diphosphate + H(+). Nucleoside triphosphate pyrophosphatase that hydrolyzes 7-methyl-GTP (m(7)GTP). May have a dual role in cell division arrest and in preventing the incorporation of modified nucleotides into cellular nucleic acids. This Shigella boydii serotype 4 (strain Sb227) protein is 7-methyl-GTP pyrophosphatase (yceF1).